A 113-amino-acid polypeptide reads, in one-letter code: Large ribosomal subunit protein uL24 (113 aa).

It belongs to the universal ribosomal protein uL24 family. As to quaternary structure, part of the 50S ribosomal subunit.

Functionally, one of two assembly initiator proteins, it binds directly to the 5'-end of the 23S rRNA, where it nucleates assembly of the 50S subunit. One of the proteins that surrounds the polypeptide exit tunnel on the outside of the subunit. The sequence is that of Large ribosomal subunit protein uL24 from Micrococcus luteus (Micrococcus lysodeikticus).